Reading from the N-terminus, the 430-residue chain is MSLGQRLALLASRLQEPQRVASFQRLCGVEVPLSSPAADEDAETEVRGAPGEPRRRGRQPGAEDSPAKADCCGAPNGVRNGLAAEPGPTGPRRAGSQRRNSLTGEEGELVKVSNLPLYYLFCLGTELGNELFYILFFPFWIWNLDPFVGRRLVIIWVLVMYLGQCTKDIIRWPRPASPPVIKLEVFYNSEYSMPSTHAMSGTAIPIAMFLLTYGRWQYPLIYGLILIPCWSSLVCLSRIYMGMHSILDVIAGFLYTILILIIFYPLVDLIDNFNQTYKYAPLIIIGLHLILGIFSFTLDTWSTSRGDTAEILGSGAGIACGSHAAYTLGLSLEPSLHMLPLAIPPLTVTLFGKAILRIVLGMLLVLFVRDIMKKITIPLACKLSSIPCHDIRQARQHMEVELPYRYITYGMVGFSITFLVPYVFSFIGIS.

A disordered region spans residues 34-103 (SSPAADEDAE…AGSQRRNSLT (70 aa)). Residue S101 is modified to Phosphoserine. Position 103 is a phosphothreonine (T103). The next 4 membrane-spanning stretches (helical) occupy residues 121–141 (FCLGTELGNELFYILFFPFWI), 152–172 (LVIIWVLVMYLGQCTKDIIRW), 193–213 (MPSTHAMSGTAIPIAMFLLTY), and 216–236 (WQYPLIYGLILIPCWSSLVCL). The phosphatase sequence motif I stretch occupies residues 167 to 175 (KDIIRWPRP). Positions 194-197 (PSTH) are phosphatase sequence motif II. H197 (proton donor) is an active-site residue. The phosphatase sequence motif III stretch occupies residues 237 to 248 (SRIYMGMHSILD). Residue H244 is the Nucleophile of the active site. The next 5 membrane-spanning stretches (helical) occupy residues 246-266 (ILDVIAGFLYTILILIIFYPL), 279-299 (YAPLIIIGLHLILGIFSFTLD), 311-331 (ILGSGAGIACGSHAAYTLGLS), 348-368 (VTLFGKAILRIVLGMLLVLFV), and 409-429 (YGMVGFSITFLVPYVFSFIGI).

Belongs to the type 2 lipid phosphate phosphatase family. In terms of tissue distribution, highly expressed in liver and kidney. Expressed in epidermis, in the stratum granulosum and the stratum spinosum.

The protein localises to the endoplasmic reticulum membrane. It is found in the cell membrane. It carries out the reaction sphinganine 1-phosphate + H2O = sphinganine + phosphate. It catalyses the reaction sphing-4-enine 1-phosphate + H2O = sphing-4-enine + phosphate. Inhibited by NaF, sodium orthovanadate, propanolol, and N-ethylmaleimide. In terms of biological role, specifically dephosphorylates sphingosine 1-phosphate (S1P), dihydro-S1P, and phyto-S1P. Does not act on ceramide 1-phosphate, lysophosphatidic acid or phosphatidic acid. Sphingosine-1-phosphate phosphatase activity is needed for efficient recycling of sphingosine into the sphingolipid synthesis pathway. Regulates the intracellular levels of the bioactive sphingolipid metabolite S1P that regulates diverse biological processes acting both as an extracellular receptor ligand or as an intracellular second messenger. Involved in efficient ceramide synthesis from exogenous sphingoid bases. Converts S1P to sphingosine, which is readily metabolized to ceramide via ceramide synthase. In concert with sphingosine kinase 2 (SphK2), recycles sphingosine into ceramide through a phosphorylation/dephosphorylation cycle. Regulates endoplasmic-to-Golgi trafficking of ceramides, resulting in the regulation of ceramide levels in the endoplasmic reticulum, preferentially long-chain ceramide species, and influences the anterograde membrane transport of both ceramide and proteins from the endoplasmic reticulum to the Golgi apparatus. The modulation of intracellular ceramide levels in turn regulates apoptosis. Via S1P levels, modulates resting tone, intracellular Ca(2+) and myogenic vasoconstriction in resistance arteries. Also involved in unfolded protein response (UPR) and ER stress-induced autophagy via regulation of intracellular S1P levels. Involved in the regulation of epidermal homeostasis and keratinocyte differentiation. In Mus musculus (Mouse), this protein is Sphingosine-1-phosphate phosphatase 1.